Consider the following 151-residue polypeptide: UPF0178 protein RD1_0321 (151 aa).

It belongs to the UPF0178 family.

The chain is UPF0178 protein RD1_0321 from Roseobacter denitrificans (strain ATCC 33942 / OCh 114) (Erythrobacter sp. (strain OCh 114)).